The sequence spans 137 residues: S-protein homolog 16 (137 aa).

Positions 1–21 are cleaved as a signal peptide; that stretch reads MKNLLVFIFVFSLCMFDHVSG. N-linked (GlcNAc...) asparagine glycosylation occurs at asparagine 87.

The protein belongs to the plant self-incompatibility (S1) protein family.

It localises to the secreted. The protein is S-protein homolog 16 of Arabidopsis thaliana (Mouse-ear cress).